Consider the following 688-residue polypeptide: ATP-dependent zinc metalloprotease FTSH 6, chloroplastic (688 aa).

Residues M1–L75 constitute a chloroplast transit peptide. The span at Q25–S36 shows a compositional bias: polar residues. Positions Q25–L44 are disordered. Residues A76–P83 constitute a thylakoid transit peptide. The Lumenal, thylakoid portion of the chain corresponds to E84–A168. Residues F169–L189 form a helical membrane-spanning segment. Residues T190 to V688 are Stromal-facing. G264–T271 contacts ATP. Residue H485 coordinates Zn(2+). E486 is a catalytic residue. Residues H489 and D563 each coordinate Zn(2+).

The protein in the N-terminal section; belongs to the AAA ATPase family. In the C-terminal section; belongs to the peptidase M41 family. Zn(2+) is required as a cofactor.

The protein resides in the plastid. Its subcellular location is the chloroplast thylakoid membrane. Functionally, probable ATP-dependent zinc metallopeptidase. Involved in the degradation of the light-harvesting complex of photosystem II (LHC II) during senescence or high light acclimation. This is ATP-dependent zinc metalloprotease FTSH 6, chloroplastic (FTSH6) from Arabidopsis thaliana (Mouse-ear cress).